We begin with the raw amino-acid sequence, 50 residues long: Small ribosomal subunit protein uS14 (50 aa).

Zn(2+) is bound by residues Cys15, Cys18, Cys33, and Cys36.

This sequence belongs to the universal ribosomal protein uS14 family. Zinc-binding uS14 subfamily. As to quaternary structure, part of the 30S ribosomal subunit. Zn(2+) serves as cofactor.

Its function is as follows. Binds 16S rRNA, required for the assembly of 30S particles. The chain is Small ribosomal subunit protein uS14 from Methanococcoides burtonii (strain DSM 6242 / NBRC 107633 / OCM 468 / ACE-M).